The sequence spans 482 residues: Putative transposase R186 (482 aa).

Residues Cys416, Cys419, Cys433, and Cys435 each contribute to the Zn(2+) site.

In the central section; belongs to the transposase 2 family. The protein in the C-terminal section; belongs to the transposase 35 family.

This is Putative transposase R186 from Acanthamoeba polyphaga (Amoeba).